Consider the following 125-residue polypeptide: Glycoprotein hormones alpha chain (125 aa).

The signal sequence occupies residues 1 to 30 (MVSAVTTMGCMKAAGVSLLLLYFLLNAADS). 5 cysteine pairs are disulfide-bonded: C41/C64, C44/C93, C61/C114, C65/C116, and C92/C119. N-linked (GlcNAc...) asparagine glycosylation is found at N85 and N110.

This sequence belongs to the glycoprotein hormones subunit alpha family. As to quaternary structure, heterodimer. Glycoprotein hormones are heterodimers composed of a common alpha chain described here and a unique beta chain which confers their biological specificity to the different hormones.

The protein localises to the secreted. In terms of biological role, shared alpha chain of heterodimeric glycoprotein hormones. These hormones bind specific receptors on target cells that in turn activate downstream signaling pathways. Involved in gametogenesis and steroidogenesis. This chain is Glycoprotein hormones alpha chain (cga), found in Fundulus heteroclitus (Killifish).